The chain runs to 86 residues: Small ribosomal subunit protein uS17 (86 aa).

The protein belongs to the universal ribosomal protein uS17 family. In terms of assembly, part of the 30S ribosomal subunit.

Its function is as follows. One of the primary rRNA binding proteins, it binds specifically to the 5'-end of 16S ribosomal RNA. The chain is Small ribosomal subunit protein uS17 from Streptococcus pyogenes serotype M6 (strain ATCC BAA-946 / MGAS10394).